The following is a 273-amino-acid chain: Type II restriction enzyme HgiCII (273 aa).

This sequence belongs to the TdeIII type II restriction endonuclease family.

The enzyme catalyses Endonucleolytic cleavage of DNA to give specific double-stranded fragments with terminal 5'-phosphates.. Functionally, a P subtype restriction enzyme that recognizes the double-stranded sequence 5'-GGWCC-3' and cleaves after G-1. The polypeptide is Type II restriction enzyme HgiCII (Herpetosiphon aurantiacus (Herpetosiphon giganteus)).